The sequence spans 3112 residues: Genome polyprotein (3112 aa).

The Peptidase S30 domain occupies 234–383 (KLTQRRANKI…PDCLEGLTYY (150 aa)). Active-site for P1 proteinase activity residues include His286, Asp301, and Ser333. Residues 729 to 850 (TLVPKSGFCY…IETFKDYRIG (122 aa)) form the Peptidase C6 domain. Residues Cys737 and His809 each act as for helper component proteinase activity in the active site. The region spanning 1278-1429 (NIATGAGNEF…CVPTNHKVDV (152 aa)) is the Helicase ATP-binding domain. 1291 to 1298 (GDVGSGKS) serves as a coordination point for ATP. Positions 1379–1382 (DECH) match the DECH box motif. Positions 1444-1627 (SIDSHAEGLR…EVNFVTREQV (184 aa)) constitute a Helicase C-terminal domain. The Peptidase C4 domain maps to 2096–2311 (DDNYVPHSRC…ISWKGVPTNM (216 aa)). Residues His2140, Asp2174, and Cys2243 each act as for nuclear inclusion protein A activity in the active site. The region spanning 2569 to 2687 (WKFIDADGSR…NAPQGVCETI (119 aa)) is the RdRp catalytic domain. Residues 2818-2867 (HSGADQSGVVKDQTGDKAEGSGTKTEDPPNQTTDPVNNPSNGGNKDAPQN) form a disordered region. Positions 2830 to 2844 (QTGDKAEGSGTKTED) are enriched in basic and acidic residues. The segment covering 2845-2867 (PPNQTTDPVNNPSNGGNKDAPQN) has biased composition (polar residues).

The protein belongs to the potyviridae genome polyprotein family. Post-translationally, VPg is uridylylated by the polymerase and is covalently attached to the 5'-end of the genomic RNA. This uridylylated form acts as a nucleotide-peptide primer for the polymerase. Genome polyprotein of potyviruses undergoes post-translational proteolytic processing by the main proteinase NIa-pro resulting in the production of at least ten individual proteins. The P1 proteinase and the HC-pro cleave only their respective C-termini autocatalytically. 6K1 is essential for proper proteolytic separation of P3 from CI.

It is found in the host cytoplasmic vesicle. The protein localises to the virion. It catalyses the reaction RNA(n) + a ribonucleoside 5'-triphosphate = RNA(n+1) + diphosphate. The catalysed reaction is Hydrolyzes glutaminyl bonds, and activity is further restricted by preferences for the amino acids in P6 - P1' that vary with the species of potyvirus, e.g. Glu-Xaa-Xaa-Tyr-Xaa-Gln-|-(Ser or Gly) for the enzyme from tobacco etch virus. The natural substrate is the viral polyprotein, but other proteins and oligopeptides containing the appropriate consensus sequence are also cleaved.. It carries out the reaction Hydrolyzes a Gly-|-Gly bond at its own C-terminus, commonly in the sequence -Tyr-Xaa-Val-Gly-|-Gly, in the processing of the potyviral polyprotein.. Its function is as follows. Required for aphid transmission and also has proteolytic activity. Only cleaves a Gly-Gly dipeptide at its own C-terminus. Interacts with virions and aphid stylets. Acts as a suppressor of RNA-mediated gene silencing, also known as post-transcriptional gene silencing (PTGS), a mechanism of plant viral defense that limits the accumulation of viral RNAs. May have RNA-binding activity. Has helicase activity. It may be involved in replication. In terms of biological role, indispensable for virus replication. Functionally, mediates the cap-independent, EIF4E-dependent translation of viral genomic RNAs. Binds to the cap-binding site of host EIF4E and thus interferes with the host EIF4E-dependent mRNA export and translation. VPg-RNA directly binds EIF4E and is a template for transcription. Also forms trimeric complexes with EIF4E-EIF4G, which are templates for translation. Its function is as follows. Has RNA-binding and proteolytic activities. An RNA-dependent RNA polymerase that plays an essential role in the virus replication. In terms of biological role, involved in aphid transmission, cell-to-cell and systemis movement, encapsidation of the viral RNA and in the regulation of viral RNA amplification. The polypeptide is Genome polyprotein (Triticum aestivum (Wheat)).